The chain runs to 271 residues: MAGAEDAPGRQPELDEDETAEGRRWGAQHAGARELAALYSPGKRFQEWCSVILCFSLIAHNLVHLLLLARWEHTPLVILGVVAGALVADFLSGLVHWGADTWGSVDLPIVGKAFIRPFREHHIDPTAITRHDFIETNGDNCLVTLLPLLNMAYKFRTQSPETLEQLYPWECFVFCLTIFGTFTNQIHKWSHTYLGLPYWVTVLQDWHVILPRKHHRIHHVAPHETYFCITTGWLNYPLEVIGFWRRLEDLIQGLTGEKPRADDMKWAQKIK.

The interval 1–25 (MAGAEDAPGRQPELDEDETAEGRRW) is disordered. A run of 3 helical transmembrane segments spans residues 48-68 (WCSV…LLLL), 75-95 (PLVI…SGLV), and 166-186 (LYPW…TNQI). The Histidine box-1 signature appears at 187-191 (HKWSH). The Histidine box-2 motif lies at 214–218 (HHRIH).

This sequence belongs to the fatty acid desaturase CarF family.

Its subcellular location is the endoplasmic reticulum membrane. The enzyme catalyses a 1-(1,2-saturated alkyl)-2-acyl-sn-glycero-3-phosphoethanolamine + 2 Fe(II)-[cytochrome b5] + O2 + 2 H(+) = a 1-O-(1Z-alkenyl)-2-acyl-sn-glycero-3-phosphoethanolamine + 2 Fe(III)-[cytochrome b5] + 2 H2O. It carries out the reaction a 1-O-hexadecyl-2-acyl-sn-glycero-3-phosphoethanolamine + 2 Fe(II)-[cytochrome b5] + O2 + 2 H(+) = a 1-O-(1Z-hexadecenyl)-2-acyl-sn-glycero-3-phosphoethanolamine + 2 Fe(III)-[cytochrome b5] + 2 H2O. The catalysed reaction is a 1-O-octadecyl-2-acyl-sn-glycero-3-phosphoethanolamine + 2 Fe(II)-[cytochrome b5] + O2 + 2 H(+) = a 1-O-(1Z-octadecenyl)-2-acyl-sn-glycero-3-phosphoethanolamine + 2 Fe(III)-[cytochrome b5] + 2 H2O. It catalyses the reaction a 1-O-(9Z-octadecenyl)-2-acyl-sn-glycero-3-phosphoethanolamine + 2 Fe(II)-[cytochrome b5] + O2 + 2 H(+) = a 1-O-(1Z,9Z-octadecadienyl)-2-acyl-sn-glycero-3-phosphoethanolamine + 2 Fe(III)-[cytochrome b5] + 2 H2O. Its pathway is lipid metabolism; fatty acid metabolism. Functionally, plasmanylethanolamine desaturase involved in plasmalogen biogenesis in the endoplasmic reticulum membrane. Plasmalogens are glycerophospholipids with a hydrocarbon chain linked by a vinyl ether bond at the glycerol sn-1 position, and are involved in antioxidative and signaling mechanisms. The polypeptide is Plasmanylethanolamine desaturase 1 (Mus musculus (Mouse)).